We begin with the raw amino-acid sequence, 372 residues long: Probable NADH-dependent flavin oxidoreductase YqiG (372 aa).

The protein belongs to the NADH:flavin oxidoreductase/NADH oxidase family.

The chain is Probable NADH-dependent flavin oxidoreductase YqiG (yqiG) from Bacillus subtilis (strain 168).